A 335-amino-acid polypeptide reads, in one-letter code: Cytoplasmic envelopment protein 2 (335 aa).

It belongs to the herpesviridae cytoplasmic envelopment protein 2 family. In terms of assembly, interacts with cytoplasmic envelopment protein 3 and with the capsid.

The protein resides in the virion tegument. It is found in the host cytoplasm. Its subcellular location is the host nucleus. In terms of biological role, plays a critical role in cytoplasmic virus egress. Participates in the final step of tegumentation and envelope acquisition within the host cytoplasm by directly interacting with the capsid. Upon virion binding to target cell, a signaling cascade is triggered to disrupt the interaction with the capsid, thereby preparing capsid uncoating. This chain is Cytoplasmic envelopment protein 2 (U65), found in Human herpesvirus 6A (strain Uganda-1102) (HHV-6 variant A).